We begin with the raw amino-acid sequence, 78 residues long: uncharacterized protein (78 aa).

The interval 1–78 (MSSNSNTDHS…VDLEGPKDEQ (78 aa)) is disordered. Basic and acidic residues-rich tracts occupy residues 10 to 33 (STGDNRSKSEKQTDLRNALRETES) and 63 to 78 (LNLKEPVDLEGPKDEQ).

This is an uncharacterized protein from Schizosaccharomyces pombe (strain 972 / ATCC 24843) (Fission yeast).